Reading from the N-terminus, the 151-residue chain is Putative pre-16S rRNA nuclease (151 aa).

It belongs to the YqgF nuclease family.

The protein resides in the cytoplasm. Its function is as follows. Could be a nuclease involved in processing of the 5'-end of pre-16S rRNA. This is Putative pre-16S rRNA nuclease from Neisseria meningitidis serogroup C (strain 053442).